The following is a 274-amino-acid chain: 3',5'-cyclic adenosine monophosphate phosphodiesterase CpdA (274 aa).

Fe cation-binding residues include D21, H23, D63, N93, H163, H202, and H204. AMP-binding positions include H23, D63, and 93 to 94 (NH). H204 is an AMP binding site.

Belongs to the cyclic nucleotide phosphodiesterase class-III family. Fe(2+) is required as a cofactor.

The catalysed reaction is 3',5'-cyclic AMP + H2O = AMP + H(+). Hydrolyzes cAMP to 5'-AMP. Plays an important regulatory role in modulating the intracellular concentration of cAMP, thereby influencing cAMP-dependent processes. This is 3',5'-cyclic adenosine monophosphate phosphodiesterase CpdA from Vibrio vulnificus (strain CMCP6).